The primary structure comprises 406 residues: Probable transcription factor FPSE_09188 (406 aa).

The interval 1-72 is disordered; the sequence is MELPTYAVSQ…PKGSSSRCNG (72 aa). The segment covering 7 to 20 has biased composition (low complexity); it reads AVSQSLLASRSVSS.

It belongs to the bZIP family.

The protein localises to the nucleus. Functionally, the two putative transcription factors FPSE_09188 and FPSE_09189 could be responsible for orchestrating expression of the W493 A and B biosynthesis cluster genes. W493 A and B consist of six amino acid residues D-allo-thr, L-Ala, D-Ala, L-Gln, D-Tyr, and L-Val/L-Ile linked to a 3-hydroxy-4-methyltetradecanoic acid polyketide chain. The sequence is that of Probable transcription factor FPSE_09188 from Fusarium pseudograminearum (strain CS3096) (Wheat and barley crown-rot fungus).